Here is a 493-residue protein sequence, read N- to C-terminus: Probable cytosol aminopeptidase (493 aa).

Mn(2+) is bound by residues Lys-257 and Asp-262. Residue Lys-269 is part of the active site. Positions 281, 341, and 343 each coordinate Mn(2+). Arg-345 is a catalytic residue.

Belongs to the peptidase M17 family. It depends on Mn(2+) as a cofactor.

Its subcellular location is the cytoplasm. It catalyses the reaction Release of an N-terminal amino acid, Xaa-|-Yaa-, in which Xaa is preferably Leu, but may be other amino acids including Pro although not Arg or Lys, and Yaa may be Pro. Amino acid amides and methyl esters are also readily hydrolyzed, but rates on arylamides are exceedingly low.. It carries out the reaction Release of an N-terminal amino acid, preferentially leucine, but not glutamic or aspartic acids.. Functionally, presumably involved in the processing and regular turnover of intracellular proteins. Catalyzes the removal of unsubstituted N-terminal amino acids from various peptides. The protein is Probable cytosol aminopeptidase of Prochlorococcus marinus (strain MIT 9211).